We begin with the raw amino-acid sequence, 216 residues long: Octanoyltransferase (216 aa).

Positions 33–216 constitute a BPL/LPL catalytic domain; the sequence is AATADELWIV…ANRLSTSLSR (184 aa). Substrate contacts are provided by residues 72–79, 148–150, and 162–164; these read RGGEVTYH, ALG, and GVS. C180 acts as the Acyl-thioester intermediate in catalysis.

This sequence belongs to the LipB family.

Its subcellular location is the cytoplasm. The enzyme catalyses octanoyl-[ACP] + L-lysyl-[protein] = N(6)-octanoyl-L-lysyl-[protein] + holo-[ACP] + H(+). It participates in protein modification; protein lipoylation via endogenous pathway; protein N(6)-(lipoyl)lysine from octanoyl-[acyl-carrier-protein]: step 1/2. Catalyzes the transfer of endogenously produced octanoic acid from octanoyl-acyl-carrier-protein onto the lipoyl domains of lipoate-dependent enzymes. Lipoyl-ACP can also act as a substrate although octanoyl-ACP is likely to be the physiological substrate. The sequence is that of Octanoyltransferase from Janthinobacterium sp. (strain Marseille) (Minibacterium massiliensis).